Consider the following 142-residue polypeptide: Small heat shock protein IbpB (142 aa).

Residues 25-136 form the sHSP domain; the sequence is GQEPQGFPPY…QPQRIAIGTT (112 aa).

The protein belongs to the small heat shock protein (HSP20) family. As to quaternary structure, homodimer. Forms homomultimers of about 100-150 subunits at optimal growth temperatures. Conformation changes to oligomers at high temperatures or high ionic concentrations. The decrease in size of the multimers is accompanied by an increase in chaperone activity.

The protein resides in the cytoplasm. In terms of biological role, associates with aggregated proteins, together with IbpA, to stabilize and protect them from irreversible denaturation and extensive proteolysis during heat shock and oxidative stress. Aggregated proteins bound to the IbpAB complex are more efficiently refolded and reactivated by the ATP-dependent chaperone systems ClpB and DnaK/DnaJ/GrpE. Its activity is ATP-independent. This chain is Small heat shock protein IbpB, found in Serratia proteamaculans (strain 568).